We begin with the raw amino-acid sequence, 376 residues long: F-box/kelch-repeat protein At1g67480 (376 aa).

One can recognise an F-box domain in the interval 37-85; the sequence is DPLIPGLPDDVAKQCLALVPRARFPSMGSVCKKWRFVVQSKEFITVRRL. Kelch repeat units follow at residues 139–189, 190–237, 239–289, and 291–335; these read KLLV…EVNG, HVYV…AFNG, LYVM…LFCI, and WKNH…LLFS.

This Arabidopsis thaliana (Mouse-ear cress) protein is F-box/kelch-repeat protein At1g67480.